Consider the following 239-residue polypeptide: Ribonuclease PH (239 aa).

Residues Arg86 and 124-126 (GTR) each bind phosphate.

It belongs to the RNase PH family. As to quaternary structure, homohexameric ring arranged as a trimer of dimers.

It carries out the reaction tRNA(n+1) + phosphate = tRNA(n) + a ribonucleoside 5'-diphosphate. In terms of biological role, phosphorolytic 3'-5' exoribonuclease that plays an important role in tRNA 3'-end maturation. Removes nucleotide residues following the 3'-CCA terminus of tRNAs; can also add nucleotides to the ends of RNA molecules by using nucleoside diphosphates as substrates, but this may not be physiologically important. Probably plays a role in initiation of 16S rRNA degradation (leading to ribosome degradation) during starvation. The chain is Ribonuclease PH from Rhizobium etli (strain ATCC 51251 / DSM 11541 / JCM 21823 / NBRC 15573 / CFN 42).